A 285-amino-acid chain; its full sequence is Phosphatidylserine decarboxylase proenzyme (285 aa).

Residues Asp89, His146, and Ser252 each act as charge relay system; for autoendoproteolytic cleavage activity in the active site. The Schiff-base intermediate with substrate; via pyruvic acid; for decarboxylase activity role is filled by Ser252. Position 252 is a pyruvic acid (Ser); by autocatalysis (Ser252).

Belongs to the phosphatidylserine decarboxylase family. PSD-B subfamily. Prokaryotic type I sub-subfamily. As to quaternary structure, heterodimer of a large membrane-associated beta subunit and a small pyruvoyl-containing alpha subunit. Pyruvate is required as a cofactor. Is synthesized initially as an inactive proenzyme. Formation of the active enzyme involves a self-maturation process in which the active site pyruvoyl group is generated from an internal serine residue via an autocatalytic post-translational modification. Two non-identical subunits are generated from the proenzyme in this reaction, and the pyruvate is formed at the N-terminus of the alpha chain, which is derived from the carboxyl end of the proenzyme. The autoendoproteolytic cleavage occurs by a canonical serine protease mechanism, in which the side chain hydroxyl group of the serine supplies its oxygen atom to form the C-terminus of the beta chain, while the remainder of the serine residue undergoes an oxidative deamination to produce ammonia and the pyruvoyl prosthetic group on the alpha chain. During this reaction, the Ser that is part of the protease active site of the proenzyme becomes the pyruvoyl prosthetic group, which constitutes an essential element of the active site of the mature decarboxylase.

It is found in the cell membrane. The enzyme catalyses a 1,2-diacyl-sn-glycero-3-phospho-L-serine + H(+) = a 1,2-diacyl-sn-glycero-3-phosphoethanolamine + CO2. It participates in phospholipid metabolism; phosphatidylethanolamine biosynthesis; phosphatidylethanolamine from CDP-diacylglycerol: step 2/2. In terms of biological role, catalyzes the formation of phosphatidylethanolamine (PtdEtn) from phosphatidylserine (PtdSer). In Vibrio vulnificus (strain CMCP6), this protein is Phosphatidylserine decarboxylase proenzyme.